Reading from the N-terminus, the 351-residue chain is UPF0764 protein C16orf89 homolog (351 aa).

Residues 1–25 (MKSLKMLYPLFMLLVLSSKIDLSNQ) form the signal peptide.

It belongs to the UPF0764 family. As to quaternary structure, homodimer.

Its subcellular location is the secreted. This is UPF0764 protein C16orf89 homolog from Danio rerio (Zebrafish).